We begin with the raw amino-acid sequence, 338 residues long: 1-aminocyclopropane-1-carboxylate deaminase (338 aa).

At Lys-51 the chain carries N6-(pyridoxal phosphate)lysine. Residue Ser-78 is the Nucleophile of the active site.

This sequence belongs to the ACC deaminase/D-cysteine desulfhydrase family. In terms of assembly, homotrimer. Requires pyridoxal 5'-phosphate as cofactor.

The catalysed reaction is 1-aminocyclopropane-1-carboxylate + H2O = 2-oxobutanoate + NH4(+). Functionally, catalyzes a cyclopropane ring-opening reaction, the irreversible conversion of 1-aminocyclopropane-1-carboxylate (ACC) to ammonia and alpha-ketobutyrate. Allows growth on ACC as a nitrogen source. This is 1-aminocyclopropane-1-carboxylate deaminase from Methylibium petroleiphilum (strain ATCC BAA-1232 / LMG 22953 / PM1).